Reading from the N-terminus, the 267-residue chain is Tryptophan synthase alpha chain (267 aa).

Active-site proton acceptor residues include glutamate 47 and aspartate 58.

This sequence belongs to the TrpA family. As to quaternary structure, tetramer of two alpha and two beta chains.

The enzyme catalyses (1S,2R)-1-C-(indol-3-yl)glycerol 3-phosphate + L-serine = D-glyceraldehyde 3-phosphate + L-tryptophan + H2O. The protein operates within amino-acid biosynthesis; L-tryptophan biosynthesis; L-tryptophan from chorismate: step 5/5. The alpha subunit is responsible for the aldol cleavage of indoleglycerol phosphate to indole and glyceraldehyde 3-phosphate. The sequence is that of Tryptophan synthase alpha chain from Chlorobium chlorochromatii (strain CaD3).